The following is a 190-amino-acid chain: Probable molybdenum cofactor guanylyltransferase (190 aa).

Residues leucine 9–glycine 11, lysine 21, aspartate 65, and aspartate 94 contribute to the GTP site. Aspartate 94 provides a ligand contact to Mg(2+).

Belongs to the MobA family. Mg(2+) serves as cofactor.

It is found in the cytoplasm. It catalyses the reaction Mo-molybdopterin + GTP + H(+) = Mo-molybdopterin guanine dinucleotide + diphosphate. Transfers a GMP moiety from GTP to Mo-molybdopterin (Mo-MPT) cofactor (Moco or molybdenum cofactor) to form Mo-molybdopterin guanine dinucleotide (Mo-MGD) cofactor. This is Probable molybdenum cofactor guanylyltransferase from Flavobacterium johnsoniae (strain ATCC 17061 / DSM 2064 / JCM 8514 / BCRC 14874 / CCUG 350202 / NBRC 14942 / NCIMB 11054 / UW101) (Cytophaga johnsonae).